Consider the following 364-residue polypeptide: Aminomethyltransferase (364 aa).

The protein belongs to the GcvT family. In terms of assembly, the glycine cleavage system is composed of four proteins: P, T, L and H.

The enzyme catalyses N(6)-[(R)-S(8)-aminomethyldihydrolipoyl]-L-lysyl-[protein] + (6S)-5,6,7,8-tetrahydrofolate = N(6)-[(R)-dihydrolipoyl]-L-lysyl-[protein] + (6R)-5,10-methylene-5,6,7,8-tetrahydrofolate + NH4(+). Functionally, the glycine cleavage system catalyzes the degradation of glycine. The protein is Aminomethyltransferase of Enterobacter sp. (strain 638).